Here is a 311-residue protein sequence, read N- to C-terminus: Retinol dehydrogenase 8 (311 aa).

9-18 (LISGCSSGIG) lines the NADP(+) pocket. Transmembrane regions (helical) follow at residues 86-106 (VLVN…SLAA), 137-157 (IVVI…VYAA), and 169-189 (LAIQ…GPVV). Ser142 serves as a coordination point for substrate. Tyr155 acts as the Proton acceptor in catalysis.

The protein belongs to the short-chain dehydrogenases/reductases (SDR) family. As to expression, detected in photoreceptor outer segments in the retina (at protein level).

It localises to the membrane. It carries out the reaction all-trans-retinol + NADP(+) = all-trans-retinal + NADPH + H(+). In terms of biological role, retinol dehydrogenase with a clear preference for NADP. Converts all-trans-retinal to all-trans-retinol. May play a role in the regeneration of visual pigment at high light intensity. In Homo sapiens (Human), this protein is Retinol dehydrogenase 8 (RDH8).